Reading from the N-terminus, the 503-residue chain is Maturase K (503 aa).

Belongs to the intron maturase 2 family. MatK subfamily.

The protein resides in the plastid. Its subcellular location is the chloroplast. In terms of biological role, usually encoded in the trnK tRNA gene intron. Probably assists in splicing its own and other chloroplast group II introns. The protein is Maturase K of Rosa acicularis (Prickly rose).